The chain runs to 664 residues: Chaperone protein DnaK (664 aa).

Thr-201 carries the post-translational modification Phosphothreonine; by autocatalysis. 2 disordered regions span residues 516–538 (DAEK…NEAD) and 578–664 (APVE…KPND). A compositionally biased stretch (basic and acidic residues) spans 578 to 592 (APVEKIKDASEELSR). Low complexity-rich tracts occupy residues 600–617 (AMQS…ANAQ) and 638–649 (AGNSASSNSNNE).

Belongs to the heat shock protein 70 family.

In terms of biological role, acts as a chaperone. This chain is Chaperone protein DnaK, found in Chlamydia caviae (strain ATCC VR-813 / DSM 19441 / 03DC25 / GPIC) (Chlamydophila caviae).